The chain runs to 397 residues: Tryptophan synthase beta chain (397 aa).

Lys-91 is subject to N6-(pyridoxal phosphate)lysine.

This sequence belongs to the TrpB family. As to quaternary structure, tetramer of two alpha and two beta chains. It depends on pyridoxal 5'-phosphate as a cofactor.

The catalysed reaction is (1S,2R)-1-C-(indol-3-yl)glycerol 3-phosphate + L-serine = D-glyceraldehyde 3-phosphate + L-tryptophan + H2O. The protein operates within amino-acid biosynthesis; L-tryptophan biosynthesis; L-tryptophan from chorismate: step 5/5. In terms of biological role, the beta subunit is responsible for the synthesis of L-tryptophan from indole and L-serine. The polypeptide is Tryptophan synthase beta chain (Bacillus cereus (strain ZK / E33L)).